The sequence spans 100 residues: MELSPREKDKLLIFTAALLAERRKEKGLKLNYPESIALISAAIMEGAREGKTVAELMDFGRTILSRDDVMEGIAEMIHDVQVEATFPDGTKLVTVHEPIV.

The protein belongs to the urease gamma subunit family. As to quaternary structure, heterotrimer of UreA (gamma), UreB (beta) and UreC (alpha) subunits. Three heterotrimers associate to form the active enzyme.

It is found in the cytoplasm. The enzyme catalyses urea + 2 H2O + H(+) = hydrogencarbonate + 2 NH4(+). Its pathway is nitrogen metabolism; urea degradation; CO(2) and NH(3) from urea (urease route): step 1/1. This is Urease subunit gamma from Teredinibacter turnerae (strain ATCC 39867 / T7901).